A 507-amino-acid polypeptide reads, in one-letter code: Tabersonine/lochnericine 19-hydroxylase (507 aa).

A helical transmembrane segment spans residues 8–28 (FFVLLLPFFIGIAFIYKLWNF). An N-linked (GlcNAc...) asparagine glycan is attached at asparagine 167. Residue cysteine 447 participates in heme binding.

This sequence belongs to the cytochrome P450 family. It depends on heme as a cofactor. As to expression, confined to roots.

The protein resides in the endoplasmic reticulum membrane. It carries out the reaction (-)-tabersonine + reduced [NADPH--hemoprotein reductase] + O2 = (-)-(R)-19-hydroxytabersonine + oxidized [NADPH--hemoprotein reductase] + H2O + H(+). It catalyses the reaction lochnericine + reduced [NADPH--hemoprotein reductase] + O2 = horhammericine + oxidized [NADPH--hemoprotein reductase] + H2O + H(+). The catalysed reaction is (-)-vincadifformine + reduced [NADPH--hemoprotein reductase] + O2 = (-)-minovincinine + oxidized [NADPH--hemoprotein reductase] + H2O + H(+). It participates in alkaloid biosynthesis. Functionally, component of the monoterpenoid indole alkaloids (MIAs, e.g. echitovenine, tabersonine, lochnericine, 19-hydroxytabersonine and horhammericine) biosynthetic pathway; MIAs are used in cancer treatment and other medical applications. Cytochrome P450 catalyzing the conversion of (-)-tabersonine to 19-hydroxytabersonine, of lochnericine to horhammericine and of (-)-vincadifformine to (-)-minovincinine. The sequence is that of Tabersonine/lochnericine 19-hydroxylase from Catharanthus roseus (Madagascar periwinkle).